A 166-amino-acid polypeptide reads, in one-letter code: Endoribonuclease YbeY (166 aa).

Zn(2+) contacts are provided by His-136, His-140, and His-146.

Belongs to the endoribonuclease YbeY family. Zn(2+) serves as cofactor.

Its subcellular location is the cytoplasm. In terms of biological role, single strand-specific metallo-endoribonuclease involved in late-stage 70S ribosome quality control and in maturation of the 3' terminus of the 16S rRNA. The polypeptide is Endoribonuclease YbeY (Synechococcus sp. (strain CC9605)).